Here is a 440-residue protein sequence, read N- to C-terminus: D-serine dehydratase (440 aa).

K116 is subject to N6-(pyridoxal phosphate)lysine.

Belongs to the serine/threonine dehydratase family. DsdA subfamily. In terms of assembly, monomer. The cofactor is pyridoxal 5'-phosphate.

The enzyme catalyses D-serine = pyruvate + NH4(+). The polypeptide is D-serine dehydratase (Salmonella arizonae (strain ATCC BAA-731 / CDC346-86 / RSK2980)).